The following is a 45-amino-acid chain: Large ribosomal subunit protein bL34 (45 aa).

It belongs to the bacterial ribosomal protein bL34 family.

The protein is Large ribosomal subunit protein bL34 of Clavibacter michiganensis subsp. michiganensis (strain NCPPB 382).